The chain runs to 290 residues: tRNA pseudouridine synthase A (290 aa).

Asp-56 (nucleophile) is an active-site residue. Residue Tyr-109 participates in substrate binding.

The protein belongs to the tRNA pseudouridine synthase TruA family.

The enzyme catalyses uridine(38/39/40) in tRNA = pseudouridine(38/39/40) in tRNA. Formation of pseudouridine at positions 38, 39 and 40 in the anticodon stem and loop of transfer RNAs. This Methanobrevibacter smithii (strain ATCC 35061 / DSM 861 / OCM 144 / PS) protein is tRNA pseudouridine synthase A.